A 507-amino-acid polypeptide reads, in one-letter code: ATP synthase subunit alpha, mitochondrial (507 aa).

171–178 (GDRQTGKT) serves as a coordination point for ATP.

The protein belongs to the ATPase alpha/beta chains family. As to quaternary structure, F-type ATPases have 2 components, CF(1) - the catalytic core - and CF(0) - the membrane proton channel. CF(1) has five subunits: alpha(3), beta(3), gamma(1), delta(1), epsilon(1). CF(0) has three main subunits: a, b and c.

The protein localises to the mitochondrion. It localises to the mitochondrion inner membrane. Its function is as follows. Mitochondrial membrane ATP synthase (F(1)F(0) ATP synthase or Complex V) produces ATP from ADP in the presence of a proton gradient across the membrane which is generated by electron transport complexes of the respiratory chain. F-type ATPases consist of two structural domains, F(1) - containing the extramembraneous catalytic core, and F(0) - containing the membrane proton channel, linked together by a central stalk and a peripheral stalk. During catalysis, ATP synthesis in the catalytic domain of F(1) is coupled via a rotary mechanism of the central stalk subunits to proton translocation. Subunits alpha and beta form the catalytic core in F(1). Rotation of the central stalk against the surrounding alpha(3)beta(3) subunits leads to hydrolysis of ATP in three separate catalytic sites on the beta subunits. Subunit alpha does not bear the catalytic high-affinity ATP-binding sites. The polypeptide is ATP synthase subunit alpha, mitochondrial (ATPA) (Brassica napus (Rape)).